We begin with the raw amino-acid sequence, 372 residues long: tRNA-specific 2-thiouridylase MnmA (372 aa).

ATP contacts are provided by residues Gly11–Ser18 and Met37. The tract at residues Asn97–Asp99 is interaction with target base in tRNA. Cys102 (nucleophile) is an active-site residue. Cys102 and Cys199 form a disulfide bridge. Gly126 serves as a coordination point for ATP. An interaction with tRNA region spans residues Lys149–Gln151. Catalysis depends on Cys199, which acts as the Cysteine persulfide intermediate. The interaction with tRNA stretch occupies residues Arg309 to Tyr310.

It belongs to the MnmA/TRMU family.

It localises to the cytoplasm. It catalyses the reaction S-sulfanyl-L-cysteinyl-[protein] + uridine(34) in tRNA + AH2 + ATP = 2-thiouridine(34) in tRNA + L-cysteinyl-[protein] + A + AMP + diphosphate + H(+). Catalyzes the 2-thiolation of uridine at the wobble position (U34) of tRNA, leading to the formation of s(2)U34. The chain is tRNA-specific 2-thiouridylase MnmA from Staphylococcus aureus (strain USA300).